A 201-amino-acid chain; its full sequence is Adenylyl-sulfate kinase (201 aa).

Residue 35 to 42 (GLSGSGKS) coordinates ATP. Ser-109 (phosphoserine intermediate) is an active-site residue.

The protein belongs to the APS kinase family.

The enzyme catalyses adenosine 5'-phosphosulfate + ATP = 3'-phosphoadenylyl sulfate + ADP + H(+). It participates in sulfur metabolism; hydrogen sulfide biosynthesis; sulfite from sulfate: step 2/3. Its function is as follows. Catalyzes the synthesis of activated sulfate. The polypeptide is Adenylyl-sulfate kinase (Erwinia tasmaniensis (strain DSM 17950 / CFBP 7177 / CIP 109463 / NCPPB 4357 / Et1/99)).